An 81-amino-acid chain; its full sequence is Antimicrobial peptide D2 (81 aa).

A signal peptide spans 1–31 (MAKTVLGIHVTFLTLLFAVILLNDVMYTPVE). Intrachain disulfides connect Cys34–Cys81, Cys45–Cys66, Cys51–Cys75, and Cys55–Cys77.

Functionally, antimicrobial peptide probably active against fungi like B.sorokiniana, F.oxysporum, F.graminearum, F.avenaceum, B.cinerea, P.beta, P.infestans and P.debaryanum. This chain is Antimicrobial peptide D2, found in Stellaria media (Common chickweed).